The sequence spans 301 residues: MTTKHDVKTFQGFILTLQEYWAQQGCAIVQPLDMEVGAGTFHPQTFLRSLGPEPMSSAYVQPSRRPTDGRYGENPNRLQHYYQFQVVLKPSPDNIQELYLGSLEALGIDTKVHDIRFVEDNWESPTLGAWGLGWEIWLNGMEVTQFTYFQQVGGIECSPVTGEITYGLERLAMYIQEVDSVYDLVWTDGPLGRVTYGDIFHQNEVEQSTYNFEHADVDFMFTLFDQCEKMCMHLLSLEKPLPLPAYEQVMKASHAFNLLDARHAISVTERQRYILRVRTMAKGVAESYYQAREALGFPMCK.

The protein belongs to the class-II aminoacyl-tRNA synthetase family. Tetramer of two alpha and two beta subunits.

It is found in the cytoplasm. The enzyme catalyses tRNA(Gly) + glycine + ATP = glycyl-tRNA(Gly) + AMP + diphosphate. The chain is Glycine--tRNA ligase alpha subunit from Shewanella frigidimarina (strain NCIMB 400).